The sequence spans 269 residues: Endo-1,3-1,4-beta-glycanase ExoK (269 aa).

An N-terminal signal peptide occupies residues 1–29 (MTIDRYRRFARLAFIATLPLAGLATAAAA). The GH16 domain occupies 40–252 (DDFDTLDTRV…RVAFTAAGDE (213 aa)). Glu-138 (nucleophile) is an active-site residue. Glu-142 (proton donor) is an active-site residue.

It belongs to the glycosyl hydrolase 16 family.

The protein resides in the secreted. It participates in glycan metabolism; exopolysaccharide biosynthesis. Its function is as follows. Cleaves high molecular weight succinoglycan to yield LMW succinoglycan. Dynamically regulates the molecular weight distribution of succinoglycan by cleaving nascent succinoglycan only during a limited period after its synthesis, perhaps before it undergoes a time-dependent change in its conformation or aggregation state. In Rhizobium meliloti (strain 1021) (Ensifer meliloti), this protein is Endo-1,3-1,4-beta-glycanase ExoK (exoK).